A 98-amino-acid chain; its full sequence is Protein translation factor SUI1 homolog (98 aa).

It belongs to the SUI1 family.

This chain is Protein translation factor SUI1 homolog, found in Thermococcus onnurineus (strain NA1).